Reading from the N-terminus, the 120-residue chain is NAD(P)H-quinone oxidoreductase subunit 3, chloroplastic (120 aa).

The next 3 helical transmembrane spans lie at 14–34 (LIISILIPILAFLISGILAPI), 64–84 (MFALVFVVFDVETVFLYPWAM), and 88–108 (VLGVSVFIEALIFVLILIVGS).

It belongs to the complex I subunit 3 family. NDH is composed of at least 16 different subunits, 5 of which are encoded in the nucleus.

The protein resides in the plastid. It localises to the chloroplast thylakoid membrane. It catalyses the reaction a plastoquinone + NADH + (n+1) H(+)(in) = a plastoquinol + NAD(+) + n H(+)(out). It carries out the reaction a plastoquinone + NADPH + (n+1) H(+)(in) = a plastoquinol + NADP(+) + n H(+)(out). In terms of biological role, NDH shuttles electrons from NAD(P)H:plastoquinone, via FMN and iron-sulfur (Fe-S) centers, to quinones in the photosynthetic chain and possibly in a chloroplast respiratory chain. The immediate electron acceptor for the enzyme in this species is believed to be plastoquinone. Couples the redox reaction to proton translocation, and thus conserves the redox energy in a proton gradient. The sequence is that of NAD(P)H-quinone oxidoreductase subunit 3, chloroplastic from Cicer arietinum (Chickpea).